We begin with the raw amino-acid sequence, 267 residues long: Regulatory protein VirG (267 aa).

In terms of domain architecture, Response regulatory spans His29 to Leu143. Residue Asp78 is modified to 4-aspartylphosphate. A DNA-binding region (ompR/PhoB-type) is located at residues Arg155–Ala255.

Phosphorylated by wide host range (WHR) VirA protein.

It localises to the cytoplasm. Functionally, virG is required for the positive regulation of at least two vir loci encoded by the Ti plasmid of A.tumefaciens. The polypeptide is Regulatory protein VirG (virG) (Rhizobium radiobacter (Agrobacterium tumefaciens)).